We begin with the raw amino-acid sequence, 299 residues long: Probable tyrosine phosphatase protein J4 (299 aa).

The Tyrosine-protein phosphatase domain maps to 16 to 289 (VEALDFLSFM…VYCYQALYVW (274 aa)). C230 functions as the Phosphocysteine intermediate in the catalytic mechanism.

It belongs to the protein-tyrosine phosphatase family.

It carries out the reaction O-phospho-L-tyrosyl-[protein] + H2O = L-tyrosyl-[protein] + phosphate. The chain is Probable tyrosine phosphatase protein J4 (J5) from Microplitis demolitor bracovirus (isolate Webb) (MdBV).